A 940-amino-acid polypeptide reads, in one-letter code: Mitogen-activated protein kinase kinase kinase 10 (940 aa).

The SH3 domain occupies 16–81 (PAGPVWTAVF…PSNYVAPAAP (66 aa)). In terms of domain architecture, Protein kinase spans 98–360 (LQLEEIIGVG…GSILKQLEVI (263 aa)). ATP contacts are provided by residues 104–112 (IGVGGFGKV) and Lys-125. The Proton acceptor role is filled by Asp-222. At Thr-258 the chain carries Phosphothreonine; by autocatalysis. At Ser-262 the chain carries Phosphoserine; by autocatalysis and MAP4K1. 2 leucine-zipper regions span residues 384 to 405 (IQHM…EEEL) and 419 to 440 (LRRR…ELHL). 3 disordered regions span residues 490–599 (PTLD…MAPG), 687–734 (RAGD…GLAP), and 749–917 (STRS…QPTL). A phosphoserine mark is found at Ser-498, Ser-502, and Ser-506. The span at 501–511 (ASPPASPSIIP) shows a compositional bias: low complexity. Residue Thr-552 is modified to Phosphothreonine. Composition is skewed to basic and acidic residues over residues 560-572 (QKER…RLKA) and 687-698 (RAGDGEEQRRWL). Residues 765–775 (APSPPPSPLAP) show a composition bias toward pro residues. Basic and acidic residues predominate over residues 822–840 (LRQREPLELTNHGPRDPLD). At Arg-843 the chain carries Omega-N-methylarginine. The span at 899–913 (PSRPDTPESPGPPSV) shows a compositional bias: pro residues.

This sequence belongs to the protein kinase superfamily. STE Ser/Thr protein kinase family. MAP kinase kinase kinase subfamily. As to quaternary structure, homodimer. Interacts with SH3RF2. The cofactor is Mg(2+). In terms of processing, autophosphorylation on serine and threonine residues within the activation loop plays a role in enzyme activation.

The enzyme catalyses L-seryl-[protein] + ATP = O-phospho-L-seryl-[protein] + ADP + H(+). It catalyses the reaction L-threonyl-[protein] + ATP = O-phospho-L-threonyl-[protein] + ADP + H(+). Homodimerization via the leucine zipper domains is required for autophosphorylation and subsequent activation. In terms of biological role, activates the JUN N-terminal pathway. This Mus musculus (Mouse) protein is Mitogen-activated protein kinase kinase kinase 10 (Map3k10).